Consider the following 320-residue polypeptide: Ribose-phosphate pyrophosphokinase (320 aa).

41-43 provides a ligand contact to ATP; that stretch reads NDN. Residues histidine 134 and aspartate 175 each contribute to the Mg(2+) site. Lysine 198 is a catalytic residue. D-ribose 5-phosphate is bound by residues arginine 200 and aspartate 224.

It belongs to the ribose-phosphate pyrophosphokinase family. Class I subfamily. Homohexamer. Mg(2+) serves as cofactor.

The protein resides in the cytoplasm. It carries out the reaction D-ribose 5-phosphate + ATP = 5-phospho-alpha-D-ribose 1-diphosphate + AMP + H(+). It participates in metabolic intermediate biosynthesis; 5-phospho-alpha-D-ribose 1-diphosphate biosynthesis; 5-phospho-alpha-D-ribose 1-diphosphate from D-ribose 5-phosphate (route I): step 1/1. In terms of biological role, involved in the biosynthesis of the central metabolite phospho-alpha-D-ribosyl-1-pyrophosphate (PRPP) via the transfer of pyrophosphoryl group from ATP to 1-hydroxyl of ribose-5-phosphate (Rib-5-P). This chain is Ribose-phosphate pyrophosphokinase, found in Deinococcus radiodurans (strain ATCC 13939 / DSM 20539 / JCM 16871 / CCUG 27074 / LMG 4051 / NBRC 15346 / NCIMB 9279 / VKM B-1422 / R1).